The chain runs to 235 residues: Lipoprotein-releasing system ATP-binding protein LolD (235 aa).

An ABC transporter domain is found at 13-235 (LCCSNIIKRY…SNGMLKISTI (223 aa)). 49-56 (GASGSGKS) serves as a coordination point for ATP.

It belongs to the ABC transporter superfamily. Lipoprotein translocase (TC 3.A.1.125) family. In terms of assembly, the complex is composed of two ATP-binding proteins (LolD) and two transmembrane proteins (LolC and LolE).

It localises to the cell inner membrane. In terms of biological role, part of the ABC transporter complex LolCDE involved in the translocation of mature outer membrane-directed lipoproteins, from the inner membrane to the periplasmic chaperone, LolA. Responsible for the formation of the LolA-lipoprotein complex in an ATP-dependent manner. The chain is Lipoprotein-releasing system ATP-binding protein LolD from Blochmanniella floridana.